We begin with the raw amino-acid sequence, 291 residues long: Gamma-sarcoglycan (291 aa).

The Cytoplasmic segment spans residues 1-37 (MVREQYTTATEGICIERPENQYVYKIGIYGWRKRCLY). The chain crosses the membrane as a helical; Signal-anchor for type II membrane protein span at residues 38 to 58 (LFVLLLLIILVVNLALTIWIL). Over 59–291 (KVMWFSPAGM…TCQEHNHICL (233 aa)) the chain is Extracellular. N-linked (GlcNAc...) asparagine glycosylation occurs at asparagine 110. Cystine bridges form between cysteine 265/cysteine 290 and cysteine 267/cysteine 283.

The protein belongs to the sarcoglycan beta/delta/gamma/zeta family. As to quaternary structure, interacts with the syntrophin SNTA1. Cross-link to form 2 major subcomplexes: one consisting of SGCB, SGCD and SGCG and the other consisting of SGCB and SGCD. The association between SGCB and SGCG is particularly strong while SGCA is loosely associated with the other sarcoglycans. Interacts with FLNC. As to expression, expressed in skeletal and heart muscle.

The protein localises to the cell membrane. It is found in the sarcolemma. The protein resides in the cytoplasm. Its subcellular location is the cytoskeleton. Its function is as follows. Component of the sarcoglycan complex, a subcomplex of the dystrophin-glycoprotein complex which forms a link between the F-actin cytoskeleton and the extracellular matrix. This Homo sapiens (Human) protein is Gamma-sarcoglycan (SGCG).